A 203-amino-acid chain; its full sequence is Outer-membrane lipoprotein carrier protein (203 aa).

Residues 1–21 form the signal peptide; sequence MKKMAIACALLSSVVASSVWA. The interval 178 to 203 is disordered; it reads QQNGAVEPSKFTFTPPQGVTIDDQRK.

Belongs to the LolA family. Monomer.

It is found in the periplasm. Participates in the translocation of lipoproteins from the inner membrane to the outer membrane. Only forms a complex with a lipoprotein if the residue after the N-terminal Cys is not an aspartate (The Asp acts as a targeting signal to indicate that the lipoprotein should stay in the inner membrane). In Salmonella typhi, this protein is Outer-membrane lipoprotein carrier protein.